A 424-amino-acid chain; its full sequence is Sulfatase ppz1 (424 aa).

Residues Asp-13, Asp-203, and Asn-204 each contribute to the Ca(2+) site.

Belongs to the sulfatase family. Ca(2+) serves as cofactor.

In terms of biological role, sulfatase; part of the gene cluster that mediates the biosynthesis of pyrrolopyrazines, secondary metabolites showing insecticidal activity. The role of ppz1 within the pathway has still to be determined. The single multifunctional NRPS ppzA is sufficient to produce peramine via condensation of 1-pyrroline-5-carboxylate and arginine, N-methylation of the alpha-amino group of arginine and reduction of the thioester and the cyclization to form an iminium ion resulting in release from the peptide synthetase. Deprotonation of this intermediate and oxidation of the pyrroline ring would give rise to peramine. In Epichloe species that produce only peramine, the peramine synthetase gene is not localized in a gene cluster, in contrast to Metarhizium species that contain additional pyrrolopyrazine biosynthesis genes. The 2-oxoglutarate-Fe(II) type oxidoreductase ppzC hydroxylates peramine to yield the newly identified compound 8-hydroxyperamine whereas ppzD converts L-proline into trans-4-hydroxy-L-proline, a precursor of peramine biosynthesis. This chain is Sulfatase ppz1, found in Metarhizium majus (strain ARSEF 297).